The chain runs to 445 residues: N-succinylarginine dihydrolase (445 aa).

Residues 19-28, Asn110, and 137-138 each bind substrate; these read AGLSYGNVAS and HR. Glu174 is a catalytic residue. Arg214 provides a ligand contact to substrate. His250 is an active-site residue. Asp252 and Asn363 together coordinate substrate. Cys369 acts as the Nucleophile in catalysis.

This sequence belongs to the succinylarginine dihydrolase family. Homodimer.

It catalyses the reaction N(2)-succinyl-L-arginine + 2 H2O + 2 H(+) = N(2)-succinyl-L-ornithine + 2 NH4(+) + CO2. It functions in the pathway amino-acid degradation; L-arginine degradation via AST pathway; L-glutamate and succinate from L-arginine: step 2/5. In terms of biological role, catalyzes the hydrolysis of N(2)-succinylarginine into N(2)-succinylornithine, ammonia and CO(2). This is N-succinylarginine dihydrolase from Aeromonas hydrophila subsp. hydrophila (strain ATCC 7966 / DSM 30187 / BCRC 13018 / CCUG 14551 / JCM 1027 / KCTC 2358 / NCIMB 9240 / NCTC 8049).